The sequence spans 170 residues: ATP synthase subunit b (170 aa).

The chain crosses the membrane as a helical span at residues Phe30–Pro50.

This sequence belongs to the ATPase B chain family. F-type ATPases have 2 components, F(1) - the catalytic core - and F(0) - the membrane proton channel. F(1) has five subunits: alpha(3), beta(3), gamma(1), delta(1), epsilon(1). F(0) has three main subunits: a(1), b(2) and c(10-14). The alpha and beta chains form an alternating ring which encloses part of the gamma chain. F(1) is attached to F(0) by a central stalk formed by the gamma and epsilon chains, while a peripheral stalk is formed by the delta and b chains.

It is found in the cell membrane. Its function is as follows. F(1)F(0) ATP synthase produces ATP from ADP in the presence of a proton or sodium gradient. F-type ATPases consist of two structural domains, F(1) containing the extramembraneous catalytic core and F(0) containing the membrane proton channel, linked together by a central stalk and a peripheral stalk. During catalysis, ATP synthesis in the catalytic domain of F(1) is coupled via a rotary mechanism of the central stalk subunits to proton translocation. In terms of biological role, component of the F(0) channel, it forms part of the peripheral stalk, linking F(1) to F(0). The polypeptide is ATP synthase subunit b (Mycobacterium ulcerans (strain Agy99)).